The sequence spans 748 residues: Structure-specific endonuclease subunit SLX4 (748 aa).

Positions 50-102 (LSSDDDSISTQVKSVTAQKSPITQETTKNDTERNKDVDKSCNPVSTSQPDLGE) are disordered. A compositionally biased stretch (polar residues) spans 57 to 75 (ISTQVKSVTAQKSPITQET). Residue threonine 72 is modified to Phosphothreonine; by ATR and ATM. Residues 76-88 (TKNDTERNKDVDK) show a composition bias toward basic and acidic residues. Threonine 113 carries the post-translational modification Phosphothreonine; by ATR and ATM. Disordered regions lie at residues 215-236 (IKTQNEGNSDKPPRARNNKGEK) and 277-303 (EKSSSSLDNQESSQQRLWTASQLPPEL). The segment covering 222–236 (NSDKPPRARNNKGEK) has biased composition (basic and acidic residues). Low complexity predominate over residues 277-291 (EKSSSSLDNQESSQQ). Phosphoserine; by ATR and ATM is present on serine 289. At threonine 319 the chain carries Phosphothreonine; by ATR and ATM. Residues serine 329 and serine 355 each carry the phosphoserine; by ATR and ATM modification.

It belongs to the SLX4 family. Forms a heterodimer with SLX1. Interacts with RAD1; catalytic subunit of the RAD1-RAD10 endonuclease. Interacts with RTT107. In terms of processing, phosphorylated by ATR (MEC1) and ATM (TEL1) upon DNA damage. This appears to be required for the function with the RAD1-RAD10 endonuclease.

It is found in the nucleus. The protein localises to the cytoplasm. Functionally, regulatory subunit that interacts with and increases the activity of different structure-specific endonucleases. Has several distinct roles in protecting genome stability by resolving diverse forms of deleterious DNA structures. Component of the SLX1-SLX4 structure-specific endonuclease that resolves DNA secondary structures generated during DNA repair and recombination. Has endonuclease activity towards branched DNA substrates, introducing single-strand cuts in duplex DNA close to junctions with ss-DNA. Has a preference for simple Y, 5'-flap and replication fork-like structures. It cleaves the strand bearing the 5'-non-homologous arm at the branch site junction and generates ligatable, nicked products from the 5'-flap or replication fork substrates. Plays a critical role in maintaining the integrity of the ribosomal DNA (rDNA) loci, where it has a role in re-starting stalled replication forks. Has Holliday junction resolvase activity in vitro. Interacts with the structure-specific RAD1-RAD10 endonuclease and promotes RAD1-RAD10-dependent 3'-non-homologous tail removal (NHTR) during repair of double-strand breaks by single-strand annealing. SLX4 also promotes recovery from DNA-alkylation-induced replisome stalling during DNA replication by facilitating the error-free mode of lesion bypass. This does not require SLX1 or RAD1-RAD10, but probably RTT107. The chain is Structure-specific endonuclease subunit SLX4 from Saccharomyces cerevisiae (strain YJM789) (Baker's yeast).